The following is a 374-amino-acid chain: Chaperone protein DnaJ (374 aa).

Residues 5-70 (DYYEVLGVAR…DKRARYDRFG (66 aa)) form the J domain. The segment at 135–213 (GDEVTLRLPK…CKGSGILQQV (79 aa)) adopts a CR-type zinc-finger fold. Zn(2+) contacts are provided by cysteine 148, cysteine 151, cysteine 165, cysteine 168, cysteine 187, cysteine 190, cysteine 201, and cysteine 204. 4 CXXCXGXG motif repeats span residues 148 to 155 (CDECNGSG), 165 to 172 (CRHCGGNG), 187 to 194 (CPVCRGEG), and 201 to 208 (CPKCKGSG).

The protein belongs to the DnaJ family. In terms of assembly, homodimer. Zn(2+) is required as a cofactor.

Its subcellular location is the cytoplasm. Participates actively in the response to hyperosmotic and heat shock by preventing the aggregation of stress-denatured proteins and by disaggregating proteins, also in an autonomous, DnaK-independent fashion. Unfolded proteins bind initially to DnaJ; upon interaction with the DnaJ-bound protein, DnaK hydrolyzes its bound ATP, resulting in the formation of a stable complex. GrpE releases ADP from DnaK; ATP binding to DnaK triggers the release of the substrate protein, thus completing the reaction cycle. Several rounds of ATP-dependent interactions between DnaJ, DnaK and GrpE are required for fully efficient folding. Also involved, together with DnaK and GrpE, in the DNA replication of plasmids through activation of initiation proteins. This is Chaperone protein DnaJ from Nitratidesulfovibrio vulgaris (strain DSM 19637 / Miyazaki F) (Desulfovibrio vulgaris).